The primary structure comprises 251 residues: 4-hydroxy-tetrahydrodipicolinate reductase (251 aa).

NAD(+) contacts are provided by residues 9-14 (GCNGKM), 85-87 (ATT), and 109-112 (SANM). The active-site Proton donor/acceptor is the H141. H142 lines the (S)-2,3,4,5-tetrahydrodipicolinate pocket. K145 acts as the Proton donor in catalysis. 151 to 152 (GT) is a binding site for (S)-2,3,4,5-tetrahydrodipicolinate.

It belongs to the DapB family.

It is found in the cytoplasm. The catalysed reaction is (S)-2,3,4,5-tetrahydrodipicolinate + NAD(+) + H2O = (2S,4S)-4-hydroxy-2,3,4,5-tetrahydrodipicolinate + NADH + H(+). It catalyses the reaction (S)-2,3,4,5-tetrahydrodipicolinate + NADP(+) + H2O = (2S,4S)-4-hydroxy-2,3,4,5-tetrahydrodipicolinate + NADPH + H(+). Its pathway is amino-acid biosynthesis; L-lysine biosynthesis via DAP pathway; (S)-tetrahydrodipicolinate from L-aspartate: step 4/4. Catalyzes the conversion of 4-hydroxy-tetrahydrodipicolinate (HTPA) to tetrahydrodipicolinate. In Caldanaerobacter subterraneus subsp. tengcongensis (strain DSM 15242 / JCM 11007 / NBRC 100824 / MB4) (Thermoanaerobacter tengcongensis), this protein is 4-hydroxy-tetrahydrodipicolinate reductase.